We begin with the raw amino-acid sequence, 264 residues long: Short-chain dehydrogenase/reductase malC (264 aa).

Residues Gly13–Glu35 traverse the membrane as a helical segment. The NADP(+) site is built by Thr22, Ser23, Ile25, Ser45, Asn46, Lys49, Asp75, Asn88, Arg130, Val202, and Thr204. An N-linked (GlcNAc...) asparagine glycan is attached at Asn249.

It belongs to the short-chain dehydrogenases/reductases (SDR) family.

Its subcellular location is the membrane. It catalyses the reaction 1-hydroxy-3-{[2-(1,1-dimethylallyl)-indol-3-yl]methyl}-6H,7H,8H-5lambda(5)-pyrrolo[1,2-a]pyrazine + NADPH + H(+) = 1-hydroxy-3-{[2-(1,1-dimethylallyl)-indol-3-yl]methyl}-4H,6H,7H,8H-pyrrolo[1,2-a]pyrazine + NADP(+). The catalysed reaction is 1-hydroxy-3-{[2-(1,1-dimethylallyl)-indol-3-yl]methyl}-4H,6H,7H,8H-pyrrolo[1,2-a]pyrazine = (+)-premalbrancheamide. It functions in the pathway alkaloid biosynthesis. Its function is as follows. Short-chain dehydrogenase/reductase; part of the gene cluster that mediates the biosynthesis of malbrancheamide, a dichlorinated fungal indole alkaloid that belongs to a family of natural products containing a characteristic bicyclo[2.2.2]diazaoctane core. The first step of malbrancheamide biosynthesis involves coupling of L-proline and L-tryptophan by malG, a bimodular NRPS, to produce L-Pro-L-Trp aldehyde through reductive offloading. This compound undergoes spontaneous cyclization and dehydration to give a dienamine which is reverse prenylated at C-2 by malE. The other prenyltransferase present in the cluster, malB, displays modest activity, suggesting that may be a redundant gene in the pathway. Subsequently, a [4+2] Diels-Alder cyclo-addition catalyzed by the bifunctional enzyme malC forms the characteristic bicyclo[2.2.2]diazaoctane ring of premalbrancheamid. The first reaction catalyzed is a NADPH-dependent reduction reaction in which the nicotinamide cofactor is a stoichiometric reagent. Either NADH or NADPH is effective as a cofactor. NADP(+) is required for stereocontrolled formation of premalbrancheamide, however it does not appear to be required as a formal stoichiometric reagent because the second reaction performed by malC, the [4+2] cycloaddition, is a balanced chemical reaction without requirement for hydride transfer to balance the reaction. Finally, the flavin-dependent halogenase malA catalyzes the iterative dichlorination of the indole ring of premalbrancheamide to yield C-9 monochlorinated malbrancheamide B, C-8 monochlorinated isomalbrancheamide B, and dichlorinated malbrancheamide. MalA is also able to brominate premalbrancheamide at C-9 to yield malbrancheamide C, and, to a lesser extend, at C-8 to yield isomalbrancheamide C. Finally, malA can brominate C-9 monochlorinated malbrancheamide B at C-8 to yield malbrancheamide D, or C-8 monochlorinated isomalbrancheamide B at C-9 to produce isomalbrancheamide D. This Malbranchea aurantiaca protein is Short-chain dehydrogenase/reductase malC.